Here is a 902-residue protein sequence, read N- to C-terminus: MRIICRQIVLLFSGFWGLAMGAFPSSVQIGGLFIRNTDQEYTAFRLAIFLHNTSPNASEAPFNLVPHVDNIETANSFAVTNAFCSQYSRGVFAIFGLYDKRSVHTLTSFCSALHISLITPSFPTEGESQFVLQLRPSLRGALLSLLDHYEWNCFVFLYDTDRGYSILQAIMEKAGQNGWHVSAICVENFNDVSYRQLLEELDRRQEKKFVIDCEIERLQNILEQIVSVGKHVKGYHYIIANLGFKDISLERFIHGGANVTGFQLVDFNTPMVTKLMDRWKKLDQREYPGSETPPKYTSALTYDGVLVMAETFRSLRRQKIDISRRGNAGDCLANPAAPWGQGIDMERTLKQVRIQGLTGNVQFDHYGRRVNYTMDVFELKSTGPRKVGYWNDMDKLVLIQDMPTLGNDTAAIENRTVVVTTIMESPYVMYKKNHEMFEGNDKYEGYCVDLASEIAKHIGIKYKIAIVPDGKYGARDADTKIWNGMVGELVYGKAEIAIAPLTITLVREEVIDFSKPFMSLGISIMIKKPQKSKPGVFSFLDPLAYEIWMCIVFAYIGVSVVLFLVSRFSPYEWHTEEPEDGKEGPSDQPPNEFGIFNSLWFSLGAFMQQGCDISPRSLSGRIVGGVWWFFTLIIISSYTANLAAFLTVERMVSPIESAEDLAKQTEIAYGTLDSGSTKEFFRRSKIAVYEKMWTYMRSAEPSVFTRTTAEGVARVRKSKGKFAFLLESTMNEYTEQRKPCDTMKVGGNLDSKGYGVATPKGSSLGNAVNLAVLKLNEQGLLDKLKNKWWYDKGECGSGGGDSKDKTSALSLSNVAGVFYILVGGLGLAMLVALIEFCYKSRAEAKRMKLTFSEATRNKARLSITGSVGENGRVLTPDCPKAVHTGTAIRQSSGLAVIASDLP.

The signal sequence occupies residues 1 to 20 (MRIICRQIVLLFSGFWGLAM). Residues 22 to 544 (AFPSSVQIGG…GVFSFLDPLA (523 aa)) lie on the Extracellular side of the membrane. N-linked (GlcNAc...) asparagine glycosylation is found at Asn52, Asn56, Asn258, Asn371, Asn407, and Asn414. A disulfide bridge connects residues Cys84 and Cys331. Residues Pro500, Thr502, and Arg507 each coordinate L-glutamate. A helical transmembrane segment spans residues 545–565 (YEIWMCIVFAYIGVSVVLFLV). Over 566–592 (SRFSPYEWHTEEPEDGKEGPSDQPPNE) the chain is Cytoplasmic. The helical; Pore-forming intramembrane region spans 593–608 (FGIFNSLWFSLGAFMQ). Residues 609–611 (QGC) lie within the membrane without spanning it. Cys611 carries the S-palmitoyl cysteine lipid modification. Over 612-617 (DISPRS) the chain is Cytoplasmic. A helical membrane pass occupies residues 618 to 638 (LSGRIVGGVWWFFTLIIISSY). At 639-813 (TANLAAFLTV…DKTSALSLSN (175 aa)) the chain is on the extracellular side. Ser676, Thr677, and Glu727 together coordinate L-glutamate. Cysteines 740 and 795 form a disulfide. A helical membrane pass occupies residues 814–834 (VAGVFYILVGGLGLAMLVALI). Residues 835 to 902 (EFCYKSRAEA…GLAVIASDLP (68 aa)) lie on the Cytoplasmic side of the membrane. The S-palmitoyl cysteine moiety is linked to residue Cys837. A Phosphoserine; by PKC/PRKCG modification is found at Ser862.

It belongs to the glutamate-gated ion channel (TC 1.A.10.1) family. GRIA4 subfamily. Homotetramer or heterotetramer of pore-forming glutamate receptor subunits. Tetramers may be formed by the dimerization of dimers. Interacts with EPB41L1 via its C-terminus. Isoform 3 interacts with PICK1. Found in a complex with GRIA1, GRIA2, GRIA3, CNIH2, CNIH3, CACNG2, CACNG3, CACNG4, CACNG5, CACNG7 and CACNG8. Interacts with CACNG5 and PRKCG. Found in a complex with GRIA1, GRIA2, GRIA3, DLG4, CACNG8 and CNIH2. Post-translationally, palmitoylated. Depalmitoylated upon L-glutamate stimulation. ZDHHC3/GODZ specifically palmitoylates Cys-611, which leads to Golgi retention and decreased cell surface expression. In contrast, Cys-837 palmitoylation does not affect cell surface expression but regulates stimulation-dependent endocytosis. Phosphorylated at Ser-862 by PRKCG; phosphorylation increases plasma membrane-associated GRI4 expression. Detected in cerebellum.

It is found in the cell membrane. The protein resides in the postsynaptic cell membrane. Its subcellular location is the cell projection. It localises to the dendrite. It catalyses the reaction Ca(2+)(in) = Ca(2+)(out). It carries out the reaction Na(+)(in) = Na(+)(out). The enzyme catalyses Mg(2+)(in) = Mg(2+)(out). Functionally, ionotropic glutamate receptor that functions as a ligand-gated cation channel, gated by L-glutamate and glutamatergic agonists such as alpha-amino-3-hydroxy-5-methyl-4-isoxazolepropionic acid (AMPA), quisqualic acid, and kainic acid. L-glutamate acts as an excitatory neurotransmitter at many synapses in the central nervous system and plays an important role in fast excitatory synaptic transmission. Binding of the excitatory neurotransmitter L-glutamate induces a conformation change, leading to the opening of the cation channel, and thereby converts the chemical signal to an electrical impulse upon entry of monovalent and divalent cations such as sodium and calcium. The receptor then desensitizes rapidly and enters a transient inactive state, characterized by the presence of bound agonist. In the presence of CACNG8, shows resensitization which is characterized by a delayed accumulation of current flux upon continued application of L-glutamate. The sequence is that of Glutamate receptor 4 from Rattus norvegicus (Rat).